The following is a 47-amino-acid chain: Putative heat shock protein HSP90 (47 aa).

Arginine 47 is a binding site for ATP.

Belongs to the heat shock protein 90 family. Homodimer.

It localises to the cytoplasm. Putative molecular chaperone that may promote the maturation, structural maintenance and proper regulation of specific target proteins. The chain is Putative heat shock protein HSP90 from Populus euphratica (Euphrates poplar).